The sequence spans 88 residues: UPF0250 protein Shew_2940 (88 aa).

Belongs to the UPF0250 family.

This chain is UPF0250 protein Shew_2940, found in Shewanella loihica (strain ATCC BAA-1088 / PV-4).